Consider the following 375-residue polypeptide: Probable sugar phosphate/phosphate translocator At3g17430 (375 aa).

10 helical membrane-spanning segments follow: residues 9–29 (LVLT…VILY), 43–63 (LPIT…FLLI), 76–96 (FEIY…SLWF), 106–126 (VAFI…MAVV), 140–160 (MLLV…FNIV), 163–183 (VYQV…QVLL), 193–213 (ITSL…PWYV), 229–249 (WIFF…FLVI), 257–276 (IRVA…TVIF), and 280–302 (TITG…YNYI). A disordered region spans residues 328–348 (EKKSSDKFNPNDSVEIPRVGG).

The protein belongs to the TPT transporter family. TPT (TC 2.A.7.9) subfamily.

The protein resides in the membrane. The polypeptide is Probable sugar phosphate/phosphate translocator At3g17430 (Arabidopsis thaliana (Mouse-ear cress)).